Consider the following 592-residue polypeptide: MTVLKLSHWRVLAELADGLPQHVSQLARMADMKPQQLNGFWQQMPAHIRGLLRQHDGYWRLVRPLAVFDAEGLRELGERSGFQTALKHECASSNDEILELARIAPDKAHKTICVTHLQSKGRGRQGRKWSHRLGECLMFSFGWVFDRPQYELGSLSPVAAVACRRALSRLGLDVQIKWPNDLVVGRDKLGGILIETVRTGGKTVAVVGIGINFVLPKEVENAASVQSLFQTASRRGNADAAVLLETLLVELDAVLLQYARDGFAPFVAEYQAANRDHGKAVLLLRDGETVFEGTVKGVDGQGVLHLETAEGKQTVVSGEISLRSDDRPVSVPKRRDSERFLLLDGGNSRLKWAWVENGTFATVGSAPYRDLSPLGAEWAEKADGNVRIVGCAVCGEFKKAQVQEQLARKIEWLPSSAQALGIRNHYRHPEEHGSDRWFNALGSRRFSRNACVVVSCGTAVTVDALTDDGHYLGGTIMPGFHLMKESLAVRTANLNRHAGKRYPFPTTTGNAVASGMMDAVCGSVMMMHGRLKEKTGAGKPVDVIITGGGAAKVAEALPPAFLAENTVRVADNLVIYGLLNMIAAEGREYEHI.

The interval 1-329 (MTVLKLSHWR…ISLRSDDRPV (329 aa)) is biotin--protein ligase. Residues 83-259 (QTALKHECAS…ELDAVLLQYA (177 aa)) enclose the BPL/LPL catalytic domain. The tract at residues 336–592 (DSERFLLLDG…AAEGREYEHI (257 aa)) is type III pantothenate kinase. Residue 344 to 351 (DGGNSRLK) coordinates ATP. Substrate-binding positions include Y426 and 433–436 (GSDR). Catalysis depends on D435, which acts as the Proton acceptor. Residue T458 participates in ATP binding. Residue T508 participates in substrate binding.

The protein in the N-terminal section; belongs to the biotin--protein ligase family. In the C-terminal section; belongs to the type III pantothenate kinase family. Requires NH4(+) as cofactor. The cofactor is K(+).

It is found in the cytoplasm. It carries out the reaction biotin + L-lysyl-[protein] + ATP = N(6)-biotinyl-L-lysyl-[protein] + AMP + diphosphate + H(+). The enzyme catalyses (R)-pantothenate + ATP = (R)-4'-phosphopantothenate + ADP + H(+). The protein operates within cofactor biosynthesis; coenzyme A biosynthesis; CoA from (R)-pantothenate: step 1/5. Activates biotin to form biotinyl-5'-adenylate and transfers the biotin moiety to biotin-accepting proteins. Its function is as follows. Catalyzes the phosphorylation of pantothenate (Pan), the first step in CoA biosynthesis. The protein is Bifunctional enzyme BirA/CoaX (birA/coaX) of Neisseria meningitidis serogroup B (strain ATCC BAA-335 / MC58).